We begin with the raw amino-acid sequence, 573 residues long: Zinc finger protein 10 (573 aa).

The KRAB domain maps to 14 to 85 (VTFKDVFVDF…EREIHQETHP (72 aa)). The segment at 206–232 (DSCASNSNECGQTFCQNIHLIQFARTH) adopts a C2H2-type 1; atypical zinc-finger fold. C2H2-type zinc fingers lie at residues 265–287 (YECK…QLIH), 293–315 (YECK…QKTH), 321–343 (YECK…QRTH), 349–371 (YTCN…QRTH), 377–399 (YECP…QRTH), 405–427 (YECN…HRIH), 433–455 (FECK…QRTH), 461–483 (YECH…QRIH), and 489–511 (YECC…QRIH). Residues 517–539 (YKCNQCGIIFSQNSPFIVHQIAH) form a C2H2-type 11; atypical zinc finger.

This sequence belongs to the krueppel C2H2-type zinc-finger protein family. As to quaternary structure, interacts (via the KRAB domain) with TRIM28 (via the RBCC domain).

It localises to the nucleus. May be involved in transcriptional regulation. This is Zinc finger protein 10 (ZNF10) from Homo sapiens (Human).